A 212-amino-acid polypeptide reads, in one-letter code: Ribonuclease HII (212 aa).

The 195-residue stretch at 17–211 (RVLAGIDEAG…VLELLDLTDS (195 aa)) folds into the RNase H type-2 domain. Residues Asp23, Glu24, and Asp120 each contribute to the a divalent metal cation site.

Belongs to the RNase HII family. The cofactor is Mn(2+). Requires Mg(2+) as cofactor.

The protein localises to the cytoplasm. It carries out the reaction Endonucleolytic cleavage to 5'-phosphomonoester.. Endonuclease that specifically degrades the RNA of RNA-DNA hybrids. This is Ribonuclease HII from Chloroflexus aggregans (strain MD-66 / DSM 9485).